A 250-amino-acid chain; its full sequence is Ribosomal RNA small subunit methyltransferase J (250 aa).

S-adenosyl-L-methionine-binding positions include 101 to 102, 117 to 118, 153 to 154, and aspartate 171; these read RD, ER, and SS.

The protein belongs to the methyltransferase superfamily. RsmJ family.

The protein resides in the cytoplasm. The enzyme catalyses guanosine(1516) in 16S rRNA + S-adenosyl-L-methionine = N(2)-methylguanosine(1516) in 16S rRNA + S-adenosyl-L-homocysteine + H(+). Specifically methylates the guanosine in position 1516 of 16S rRNA. The sequence is that of Ribosomal RNA small subunit methyltransferase J from Escherichia fergusonii (strain ATCC 35469 / DSM 13698 / CCUG 18766 / IAM 14443 / JCM 21226 / LMG 7866 / NBRC 102419 / NCTC 12128 / CDC 0568-73).